We begin with the raw amino-acid sequence, 452 residues long: Sulfide:quinone oxidoreductase, mitochondrial (452 aa).

Residues 54-55 (AG), Glu77, Gln85, and Val120 each bind FAD. Cys204 serves as the catalytic Cysteine persulfide intermediate. An intrachain disulfide couples Cys204 to Cys380. FAD contacts are provided by residues Asp337 and 345-348 (KTAA). The Cysteine persulfide intermediate role is filled by Cys380.

This sequence belongs to the SQRD family. The cofactor is FAD.

It is found in the mitochondrion. It carries out the reaction ubiquinone-10 + hydrogen sulfide + sulfite + 2 H(+) = ubiquinol-10 + thiosulfate. The catalysed reaction is a quinone + hydrogen sulfide + glutathione + H(+) = S-sulfanylglutathione + a quinol. Functionally, catalyzes the oxidation of hydrogen sulfide, with the help of a quinone. This chain is Sulfide:quinone oxidoreductase, mitochondrial, found in Dictyostelium discoideum (Social amoeba).